A 276-amino-acid polypeptide reads, in one-letter code: Phosphonates import ATP-binding protein PhnC (276 aa).

The ABC transporter domain occupies 5-253; sequence IRVERLNKTF…LLNDLYGADL (249 aa). 37–44 lines the ATP pocket; sequence GASGSGKS.

It belongs to the ABC transporter superfamily. Phosphonates importer (TC 3.A.1.9.1) family. As to quaternary structure, the complex is composed of two ATP-binding proteins (PhnC), two transmembrane proteins (PhnE) and a solute-binding protein (PhnD).

It localises to the cell inner membrane. It carries out the reaction phosphonate(out) + ATP + H2O = phosphonate(in) + ADP + phosphate + H(+). Its function is as follows. Part of the ABC transporter complex PhnCDE involved in phosphonates import. Responsible for energy coupling to the transport system. The protein is Phosphonates import ATP-binding protein PhnC of Stutzerimonas stutzeri (Pseudomonas stutzeri).